The chain runs to 37 residues: Lambda-hexatoxin-Hf1a (37 aa).

Cystine bridges form between Cys4–Cys18, Cys11–Cys23, Cys14–Cys15, and Cys17–Cys34.

Belongs to the neurotoxin 11 (kappa toxin) family. In terms of tissue distribution, expressed by the venom gland.

The protein localises to the secreted. Functionally, this excitatory toxin inhibits insect calcium-activated potassium (KCa) channels (Slo-type). The protein is Lambda-hexatoxin-Hf1a of Hadronyche formidabilis (Northern tree funnel-web spider).